A 358-amino-acid polypeptide reads, in one-letter code: MTYDMKKYIRTDLEGFAGYSACKAPELVKTKNRIIKLDANENLYGAAPTVQKAMSTFDQYHIYPDATQFEIRRLLAEYTGVNMEQIICGAGSDQLIDLLLRLFINPGDEVINCPPTFAMYKFYTDLNRGTVVNVPRDAGYDVNIGGIKNALTPKTKLIFIAAPNNPTGTAISKEDIRQILDLGVPTVIDEAYYEFTGQTMVTDMPSYPNLMILRTFSKWAGLAGLRVGYGLFPPVIADYLSRIKDPYSVNIAADAAVRQTMLQREYMLETVKKIVDERKRLYTELSKFSWLKPYPSAANFILCKLLKGKAKDVQQALESQGILVRCFDAPMMENCLRFSVGKPEDTDALLKALGEMGE.

At Lys218 the chain carries N6-(pyridoxal phosphate)lysine.

The protein belongs to the class-II pyridoxal-phosphate-dependent aminotransferase family. Histidinol-phosphate aminotransferase subfamily. Homodimer. Pyridoxal 5'-phosphate serves as cofactor.

It catalyses the reaction L-histidinol phosphate + 2-oxoglutarate = 3-(imidazol-4-yl)-2-oxopropyl phosphate + L-glutamate. The protein operates within amino-acid biosynthesis; L-histidine biosynthesis; L-histidine from 5-phospho-alpha-D-ribose 1-diphosphate: step 7/9. The chain is Histidinol-phosphate aminotransferase from Dehalococcoides mccartyi (strain ATCC BAA-2266 / KCTC 15142 / 195) (Dehalococcoides ethenogenes (strain 195)).